Here is a 377-residue protein sequence, read N- to C-terminus: Formate dehydrogenase, mitochondrial (377 aa).

The N-terminal 29 residues, 1–29, are a transit peptide targeting the mitochondrion; that stretch reads MAAMWRAAARQLVDRAVGSRAAHTSAGSK. Substrate is bound by residues Ile-121 and Asn-145. NAD(+) contacts are provided by residues Thr-146, Asp-220, 255–259, Asn-281, Asp-307, and 331–334; these read PLTEK and HISG.

This sequence belongs to the D-isomer specific 2-hydroxyacid dehydrogenase family. FDH subfamily. Homodimer.

It is found in the mitochondrion. It catalyses the reaction formate + NAD(+) = CO2 + NADH. In terms of biological role, catalyzes the NAD(+)-dependent oxidation of formate to carbon dioxide. Involved in the cell stress response. The sequence is that of Formate dehydrogenase, mitochondrial from Hordeum vulgare (Barley).